A 133-amino-acid chain; its full sequence is Nickel-responsive regulator (133 aa).

The Ni(2+) site is built by histidine 76, histidine 87, histidine 89, and cysteine 95.

The protein belongs to the transcriptional regulatory CopG/NikR family. As to quaternary structure, homotetramer. Ni(2+) is required as a cofactor.

Transcriptional repressor of the nikABCDE operon. Is active in the presence of excessive concentrations of intracellular nickel. The sequence is that of Nickel-responsive regulator from Escherichia coli (strain SE11).